The primary structure comprises 150 residues: Pyruvoyl-dependent arginine decarboxylase (150 aa).

S42 is modified (pyruvic acid (Ser)).

Belongs to the PdaD family. Requires pyruvate as cofactor.

It carries out the reaction L-arginine + H(+) = agmatine + CO2. The protein is Pyruvoyl-dependent arginine decarboxylase of Methanopyrus kandleri (strain AV19 / DSM 6324 / JCM 9639 / NBRC 100938).